An 85-amino-acid polypeptide reads, in one-letter code: Putative regulatory protein DICTH_1339 (85 aa).

The protein belongs to the RemA family.

The chain is Putative regulatory protein DICTH_1339 from Dictyoglomus thermophilum (strain ATCC 35947 / DSM 3960 / H-6-12).